Consider the following 331-residue polypeptide: MKIAIYSTKSYDRKYIELINAKYNFDLEFFDFMLNESTVRLAEHCEVVCIFVNDNGSRKVLEKLAALGVKIVALRCAGFNNVDLKAAQELGIQVVRVPAYSPEAVAEHTIGLMMTLNRRIHRAYQRTREANFSLEGLIGFNMYGRTVGVIGTGKIGIAVMRILKGFGMNILAYDPFKNPVVEELGGQYVELDELYAKSHVITLHCPATPENYHLLNCEAFAKMKDGVMIVNTSRGSLIDTQAAIDALKQRKIGALGMDVYENERDLFFEDKSNEVIQDDIFRRLSSCHNVLLTGHQAFLTEEALTNIADVTLSNIYKLKSGKVCENIVLPS.

Residues 154–155 (KI), 232–234 (TSR), and Asp-258 each bind NAD(+). Arg-234 is a catalytic residue. Glu-263 is a catalytic residue. His-295 serves as the catalytic Proton donor. NAD(+) is bound at residue 295–298 (HQAF).

The protein belongs to the D-isomer specific 2-hydroxyacid dehydrogenase family.

This is 2-hydroxyacid dehydrogenase homolog (ddh) from Haemophilus influenzae (strain ATCC 51907 / DSM 11121 / KW20 / Rd).